The chain runs to 2108 residues: Mucin-5B (2108 aa).

A signal peptide spans 1–21 (MEIKKERSFWIFCLIWSFCKG). A VWFD 1 domain is found at 36-203 (SECTTWGNFH…KVEDPSEKCP (168 aa)). 2 disulfides stabilise this stretch: Cys-38–Cys-166 and Cys-60–Cys-202. The interval 196–219 (EDPSEKCPDVRPDDHTGRHPTEDD) is disordered. In terms of domain architecture, TIL 1 spans 304 to 360 (CPSNMEYMECGNSCADTCADPERSKICKAPCTDGCFCPPGTILDDLGGKKCVPRDSC). Asn-381 carries an N-linked (GlcNAc...) (complex) asparagine glycan. The 173-residue stretch at 398 to 570 (GSCSIDGGFH…NSWKTRASCF (173 aa)) folds into the VWFD 2 domain. 3 disulfide bridges follow: Cys-400-Cys-534, Cys-422-Cys-569, and Cys-443-Cys-451. Asn-528, Asn-599, Asn-680, and Asn-772 each carry an N-linked (GlcNAc...) (complex) asparagine glycan. The TIL 2 domain occupies 666-723 (CPETMVYNYSVKYCNQSCRSLDEPDPLCKVQIAPMEGCGCPEGTYLNDEEECVTPDDC). One can recognise a TIL 3 domain in the interval 782–825 (GSECQKSCKTQDMHCYVTECVSGCMCPDGLVLDGSGGCIPKDQC). The 73-residue stretch at 825-897 (CPCVHGGHFY…DYILAQDFCP (73 aa)) folds into the VWFC 1 domain. Residue Asn-855 is glycosylated (N-linked (GlcNAc...) (complex) asparagine). A VWFD 3 domain is found at 863–1033 (GTCTVYGNGH…NSWKITSTCS (171 aa)). Cystine bridges form between Cys-865–Cys-997, Cys-887–Cys-1032, Cys-896–Cys-994, and Cys-914–Cys-921. Asn-1036, Asn-1219, Asn-1371, and Asn-1452 each carry an N-linked (GlcNAc...) (complex) asparagine glycan. The region spanning 1429–1613 (CICSGWGNEH…APVSTNRYCN (185 aa)) is the VWFD 4 domain. Cystine bridges form between Cys-1431-Cys-1573, Cys-1453-Cys-1612, and Cys-1477-Cys-1485. N-linked (GlcNAc...) (complex) asparagine glycans are attached at residues Asn-1567, Asn-1639, Asn-1792, Asn-1807, and Asn-1841. Residues 1761–1832 (CGCTAQDGSV…DPCCTETVCE (72 aa)) enclose the VWFC 2 domain. The region spanning 1870–1937 (GVCVSEGVEF…KEGQCCSQCQ (68 aa)) is the VWFC 3 domain. N-linked (GlcNAc...) (complex) asparagine glycosylation occurs at Asn-1964. Disulfide bonds link Cys-2010/Cys-2066, Cys-2031/Cys-2080, Cys-2042/Cys-2096, and Cys-2046/Cys-2098. One can recognise a CTCK domain in the interval 2010-2104 (CIDLPHKCKR…ECGCVETKCP (95 aa)).

As to quaternary structure, homomultimer; disulfide-linked. The N- and C-terminus mediate their assembly into higher order structures to form filaments. The CTCK domains of two polypeptides associate in the endoplasmic reticulum to generate intermolecularly disulfide-bonded dimers. These dimers progress to the Golgi apparatus, which is a more acidic environment than the endoplasmic reticulum. Under acidic conditions, the N-termini form non-covalent intermolecular interactions that juxtapose assemblies from different CTCK-linked dimers to produce long, disulfide-linked polymers that remain highly compact until secretion. Post-translationally, N-glycosylated. Complex glycosylation with bisecting N-acetylglucosamine. Contains mainly N-acetylglucosamine (3.1-8.5%), mannose (2.9-4.6%), a small amount of galactose (1.1-4.35) and sialic acid (0.3-1.3%). Most abundant glycan is composed of a GlcNAc(2)Man(3) core, a bisecting GlcNAc and another 3 GlcNAc antannae located on the mannoses of the core. Site Asn-1639 exists both in glycosylated and non-glycosylated forms.

It is found in the secreted. In terms of biological role, ovomucin, the glycoprotein responsible for the gel properties of egg white, is composed for 2 subunits, alpha-ovomucin/MUC5B and beta-ovomucin/MUC6. The polypeptide is Mucin-5B (MUC5B) (Gallus gallus (Chicken)).